We begin with the raw amino-acid sequence, 532 residues long: MDSLQLWQRYCDWLYYHPELEIFVDISRIRFTPAQVEALRPLFARAFAEMQALEAGAIANPDEGRQVGHYWLRAPELAPTAEIRQAIQDCVEQVESFAKKIHCGTIPASGGGRFTELLWIGIGGSALGPQFVAEALAPLQPPLNIHFIDNTDPDGFDRVLGRLAGKLGQTLVVVTSKSGNTPEPRNALVEVELAYRKAGIPFSAHAVAITGPGSQLEQQARQEGWLAVFPIFDWVGGRTSETSAVGLLPAALQGIDIRALLAGAATMDKATRVPHLERNPAALLAMAWYIVGEGRGRKDMVVLPYKDRLALFSRYLQQLVMESLGKSHDLQGNRVEQGLTVYGNKGTTDQHAYVQQLRDGLNNFFVTFIEVLQDREPGIPSPFVEPEVTSGDYLDGLLQGTRQALYENGRDSVTITLPRVDARSVGALIALYERAVGLYASLIQVNAYHQPGVEAGKKAASAVLQLQRQVLEVMREQKGSLTLPQLAEKLSCPERIETLYWIVRHLQANGRSLVLVGDPGRPLELSIQPRPA.

E322 serves as the catalytic Proton donor. Residues H351 and K457 contribute to the active site.

The protein belongs to the GPI family.

Its subcellular location is the cytoplasm. It catalyses the reaction alpha-D-glucose 6-phosphate = beta-D-fructose 6-phosphate. Its pathway is carbohydrate biosynthesis; gluconeogenesis. The protein operates within carbohydrate degradation; glycolysis; D-glyceraldehyde 3-phosphate and glycerone phosphate from D-glucose: step 2/4. Functionally, catalyzes the reversible isomerization of glucose-6-phosphate to fructose-6-phosphate. The polypeptide is Glucose-6-phosphate isomerase (Synechococcus sp. (strain JA-3-3Ab) (Cyanobacteria bacterium Yellowstone A-Prime)).